The sequence spans 164 residues: Large ribosomal subunit protein uL10 (164 aa).

It belongs to the universal ribosomal protein uL10 family. As to quaternary structure, part of the ribosomal stalk of the 50S ribosomal subunit. The N-terminus interacts with L11 and the large rRNA to form the base of the stalk. The C-terminus forms an elongated spine to which L12 dimers bind in a sequential fashion forming a multimeric L10(L12)X complex.

Functionally, forms part of the ribosomal stalk, playing a central role in the interaction of the ribosome with GTP-bound translation factors. This chain is Large ribosomal subunit protein uL10 (rplJ), found in Helicobacter pylori (strain ATCC 700392 / 26695) (Campylobacter pylori).